The primary structure comprises 79 residues: Panulirin (79 aa).

The N-terminal stretch at 1–22 (MKNKAVLMLMALFLVAVTQVHG) is a signal peptide. Positions 23 to 26 (DPEP) are excised as a propeptide. Intrachain disulfides connect Cys33-Cys63, Cys40-Cys56, and Cys46-Cys64. Residues 75 to 79 (QLLAA) constitute a propeptide that is removed on maturation.

As to quaternary structure, monomer. In terms of processing, contains 3 disulfide bonds. In terms of tissue distribution, expressed in hemocytes (at protein level).

Involved in the melanization cascade in response to lipopolysaccharide (LPS). In vitro, reversibly and competitively inhibits trypsin (Ki=8.6 nM) but not serine proteases chymotrypsin, elastase, subtilisin, thrombin and plasmin, cysteine peptidase papain or metallopeptidase carboxypeptidase A. The protein is Panulirin of Panulirus argus (Caribbean spiny lobster).